Here is a 101-residue protein sequence, read N- to C-terminus: DAEHKSNICKHFQVVGEEKFKNIILVTQDGHGPFIQVSKEEQCKHYAENRVPYMGNFIYTAAKRHPDLPATEVLIYAFXYESGAVLVSYPEMVGCCPPDVL.

Albumin domains lie at 1–80 and 81–101; these read DAEH…AFXY and ESGAVLVSYPEMVGCCPPDVL. His-4 serves as a coordination point for Cu cation.

This sequence belongs to the ALB/AFP/VDB family. As to expression, plasma.

Its subcellular location is the secreted. Functionally, binds water, Ca(2+), Na(+), K(+), fatty acids, hormones, bilirubin and drugs. Its main function is the regulation of the colloidal osmotic pressure of blood. This Neoceratodus forsteri (Australian lungfish) protein is Albumin (alb).